A 243-amino-acid chain; its full sequence is Protein-L-isoaspartate O-methyltransferase 2 (243 aa).

The segment at 21–42 (DACADRGHPSAERSTPETERRR) is disordered. Positions 23-42 (CADRGHPSAERSTPETERRR) are enriched in basic and acidic residues. The active site involves serine 94.

It belongs to the methyltransferase superfamily. L-isoaspartyl/D-aspartyl protein methyltransferase family.

It is found in the cytoplasm. The catalysed reaction is [protein]-L-isoaspartate + S-adenosyl-L-methionine = [protein]-L-isoaspartate alpha-methyl ester + S-adenosyl-L-homocysteine. In terms of biological role, catalyzes the methyl esterification of L-isoaspartyl residues in peptides and proteins that result from spontaneous decomposition of normal L-aspartyl and L-asparaginyl residues. It plays a role in the repair and/or degradation of damaged proteins. This is Protein-L-isoaspartate O-methyltransferase 2 from Anaeromyxobacter sp. (strain Fw109-5).